Here is a 316-residue protein sequence, read N- to C-terminus: Leucine-rich repeat-containing protein 73 (316 aa).

LRR repeat units lie at residues 57–78, 86–106, 114–137, 145–166, 174–187, 202–223, and 231–250; these read SLAQ…KQLA, SIQS…ALLN, ALVA…CGLL, GLKE…SRLA, QVRV…PLGD, TLEV…TLLD, and ALRS…QQQI. The segment at 257-296 is disordered; it reads GEEEEEVAGGAGDTQEWERGREPAAHQRGSSSWMCPSDPS. Basic and acidic residues predominate over residues 272 to 281; that stretch reads EWERGREPAA. Residues 286-296 show a composition bias toward low complexity; that stretch reads SSSWMCPSDPS.

In Homo sapiens (Human), this protein is Leucine-rich repeat-containing protein 73 (LRRC73).